A 162-amino-acid polypeptide reads, in one-letter code: Caveolin-2 (162 aa).

The Cytoplasmic segment spans residues 1–86; that stretch reads MGLETEKADA…FEVSKYLIYK (86 aa). Tyr19 is modified (phosphotyrosine; by SRC). The tract at residues 19 to 40 is disordered; sequence YSRHSGLGYPEPEKCAKSTQDR. Phosphoserine occurs at positions 20 and 23. Tyr27 carries the phosphotyrosine; by SRC modification. Residues 29 to 40 are compositionally biased toward basic and acidic residues; the sequence is EPEKCAKSTQDR. Ser36 bears the Phosphoserine mark. The segment at residues 87-107 is an intramembrane region (helical); sequence VLTVLLAIPLAFVAGILFATL. At 108-162 the chain is on the cytoplasmic side; the sequence is SCLHIWIVVPFVKTCLMVLPSVQTVWHSITDGFIAPLYKSMGLIFSSISLRLSPE.

It belongs to the caveolin family. In terms of assembly, monomer or homodimer. Interacts with CAV1; the interaction forms a stable heterooligomeric complex that is required for targeting to lipid rafts and for caveolae formation. Tyrosine phosphorylated forms do not form heterooligomers with the Tyr-19-phosphorylated form existing as a monomer or dimer, and the Tyr-27-form as a monomer only. Interacts (tyrosine phosphorylated form) with the SH2 domain-containing proteins, RASA1, NCK1 and SRC. Interacts (tyrosine phosphorylated form) with INSR, the interaction (Tyr-27-phosphorylated form) is increased on insulin stimulation. Interacts (Tyr-19 phosphorylated form) with MAPK1 (phosphorylated form); the interaction, promoted by insulin, leads to nuclear location and MAPK1 activation. Interacts with STAT3; the interaction is increased on insulin-induced tyrosine phosphorylation leading to STAT activation. Phosphorylated on serine and tyrosine residues. CAV1 promotes phosphorylation on Ser-23 which then targets the complex to the plasma membrane, lipid rafts and caveolae. Phosphorylation on Ser-36 appears to modulate mitosis in endothelial cells. Phosphorylation on both Tyr-19 and Tyr-27 is required for insulin-induced 'Ser-727' phosphorylation of STAT3 and its activation. Phosphorylation on Tyr-19 is required for insulin-induced phosphorylation of MAPK1 and DNA binding of STAT3. Tyrosine phosphorylation is induced by both EGF and insulin (By. similarity).

It localises to the nucleus. Its subcellular location is the cytoplasm. The protein localises to the golgi apparatus membrane. The protein resides in the cell membrane. It is found in the membrane. It localises to the caveola. May act as a scaffolding protein within caveolar membranes. Interacts directly with G-protein alpha subunits and can functionally regulate their activity. Acts as an accessory protein in conjunction with CAV1 in targeting to lipid rafts and driving caveolae formation. The Ser-36 phosphorylated form has a role in modulating mitosis in endothelial cells. Positive regulator of cellular mitogenesis of the MAPK signaling pathway. Required for the insulin-stimulated nuclear translocation and activation of MAPK1 and STAT3, and the subsequent regulation of cell cycle progression. This chain is Caveolin-2 (CAV2), found in Didelphis virginiana (North American opossum).